The chain runs to 1186 residues: Myelin transcription factor 1-like protein (1186 aa).

A disordered region spans residues 1–21 (MEVDTEEKRHRTRSKGVRVPV). A CCHHC-type 1 zinc finger spans residues 22–65 (EPAIQELFSCPTPGCDGSGHVSGKYARHRSVYGCPLAKKRKTQD). Zn(2+)-binding residues include Cys31, Cys36, His49, and Cys55. 2 disordered regions span residues 56-175 (PLAK…QMNC) and 220-247 (RTES…GRKS). A compositionally biased stretch (acidic residues) spans 86-169 (SVDECDDSDG…EEEEEEEENE (84 aa)). Residue Ser250 is modified to Phosphoserine. Disordered regions lie at residues 342–372 (SETN…GRTP) and 449–513 (REKM…GCDG). A compositionally biased stretch (polar residues) spans 343–357 (ETNPQERNPQQNMNI). Composition is skewed to basic and acidic residues over residues 361 to 372 (VRPEEDFPGRTP), 449 to 487 (REKM…DSHV), and 495 to 505 (DPSRTEKKESK). 2 consecutive CCHHC-type zinc fingers follow at residues 497–540 (SRTE…PPEI) and 541–584 (LAMH…KLAK). Zn(2+) contacts are provided by Cys506, Cys511, His524, Cys530, Cys550, Cys555, His568, and Cys574. Disordered stretches follow at residues 659-709 (RAIA…GGGS) and 753-780 (KPQD…MNKQ). A compositionally biased stretch (basic and acidic residues) spans 666 to 683 (QTRDISPKGYDDAKRYCK). Over residues 685–709 (PSPSSSSTSSYAPSSSSNLSCGGGS) the composition is skewed to low complexity. 3 CCHHC-type zinc fingers span residues 896–939 (LATS…GIRI), 945–988 (DKED…QKDG), and 998–1041 (KSVK…MKKA). Zn(2+) is bound by residues Cys905, Cys910, His923, Cys929, Cys954, Cys959, His972, Cys978, Cys1007, Cys1012, His1025, and Cys1031. Residues 1056 to 1130 (SNGIENDEEI…LANLSQSLIH (75 aa)) are a coiled coil.

This sequence belongs to the MYT1 family. Interacts with SIN3B.

The protein localises to the nucleus. It localises to the chromosome. Transcription factor that plays a key role in neuronal differentiation by specifically repressing expression of non-neuronal genes during neuron differentiation. In contrast to other transcription repressors that inhibit specific lineages, mediates repression of multiple differentiation programs. Also represses expression of negative regulators of neurogenesis, such as members of the Notch signaling pathway, including HES1. The combination of three transcription factors, ASCL1, POU3F2/BRN2 and MYT1L, is sufficient to reprogram fibroblasts and other somatic cells into induced neuronal (iN) cells in vitro. Directly binds the 5'-AAGTT-3' core motif present on the promoter of target genes and represses transcription by recruiting a multiprotein complex containing SIN3B. The 5'-AAGTT-3' core motif is absent from the promoter of neural genes. The chain is Myelin transcription factor 1-like protein from Homo sapiens (Human).